Reading from the N-terminus, the 200-residue chain is Potassium-transporting ATPase KdpC subunit (200 aa).

Residues 6 to 26 (PALVLLILLTLITGIAYPLLT) traverse the membrane as a helical segment.

This sequence belongs to the KdpC family. As to quaternary structure, the system is composed of three essential subunits: KdpA, KdpB and KdpC.

The protein localises to the cell inner membrane. Functionally, part of the high-affinity ATP-driven potassium transport (or Kdp) system, which catalyzes the hydrolysis of ATP coupled with the electrogenic transport of potassium into the cytoplasm. This subunit acts as a catalytic chaperone that increases the ATP-binding affinity of the ATP-hydrolyzing subunit KdpB by the formation of a transient KdpB/KdpC/ATP ternary complex. The chain is Potassium-transporting ATPase KdpC subunit from Yersinia pseudotuberculosis serotype O:1b (strain IP 31758).